A 255-amino-acid polypeptide reads, in one-letter code: 4-hydroxy-tetrahydrodipicolinate reductase (255 aa).

NAD(+) contacts are provided by residues 9–14 (GYRGKM), 89–91 (GTT), and 115–118 (APNF). Histidine 145 acts as the Proton donor/acceptor in catalysis. Histidine 146 contacts (S)-2,3,4,5-tetrahydrodipicolinate. The active-site Proton donor is the lysine 149. 155–156 (GT) lines the (S)-2,3,4,5-tetrahydrodipicolinate pocket.

Belongs to the DapB family.

The protein localises to the cytoplasm. It catalyses the reaction (S)-2,3,4,5-tetrahydrodipicolinate + NAD(+) + H2O = (2S,4S)-4-hydroxy-2,3,4,5-tetrahydrodipicolinate + NADH + H(+). The enzyme catalyses (S)-2,3,4,5-tetrahydrodipicolinate + NADP(+) + H2O = (2S,4S)-4-hydroxy-2,3,4,5-tetrahydrodipicolinate + NADPH + H(+). Its pathway is amino-acid biosynthesis; L-lysine biosynthesis via DAP pathway; (S)-tetrahydrodipicolinate from L-aspartate: step 4/4. In terms of biological role, catalyzes the conversion of 4-hydroxy-tetrahydrodipicolinate (HTPA) to tetrahydrodipicolinate. This is 4-hydroxy-tetrahydrodipicolinate reductase from Streptococcus uberis (strain ATCC BAA-854 / 0140J).